Here is a 269-residue protein sequence, read N- to C-terminus: Cbp/p300-interacting transactivator 2 (269 aa).

The interval 142–200 (AGHQMNGTNQHFRDCNPKHSGGSSTPGGAGGSGTPGGSGGTSGGAGGSSAGGSGGGSTM) is disordered. The segment covering 165–198 (STPGGAGGSGTPGGSGGTSGGAGGSSAGGSGGGS) has biased composition (gly residues).

The protein belongs to the CITED family. As to quaternary structure, interacts (via C-terminus) with EP300 (via CH1 domain); the interaction is stimulated in response to hypoxia. Interacts with PPARA. Interacts (via C-terminus) with TFAP2A, TFAP2B and TFAP2C. Interacts (via C-terminus) with SMAD2. Interacts (via C-terminus) with SMAD3 (via MH2 domain). Interacts with LHX2 (via LIM domains). Interacts with WT1 isoform 1 and isoform 3. As to expression, ubiquitous.

It localises to the nucleus. Its function is as follows. Transcriptional coactivator of the p300/CBP-mediated transcription complex. Acts as a bridge, linking TFAP2 transcription factors and the p300/CBP transcriptional coactivator complex in order to stimulate TFAP2-mediated transcriptional activation. Positively regulates TGF-beta signaling through its association with the SMAD/p300/CBP-mediated transcriptional coactivator complex. Stimulates the peroxisome proliferator-activated receptors PPARA transcriptional activity. Enhances estrogen-dependent transactivation mediated by estrogen receptors. Also acts as a transcriptional corepressor; interferes with the binding of the transcription factors HIF1A or STAT2 and the p300/CBP transcriptional coactivator complex. Participates in sex determination and early gonad development by stimulating transcription activation of SRY. Plays a role in controlling left-right patterning during embryogenesis; potentiates transcriptional activation of NODAL-mediated gene transcription in the left lateral plate mesoderm (LPM). Plays an essential role in differentiation of the adrenal cortex from the adrenogonadal primordium (AGP); stimulates WT1-mediated transcription activation thereby up-regulating the nuclear hormone receptor NR5A1 promoter activity. Associates with chromatin to the PITX2 P1 promoter region. The polypeptide is Cbp/p300-interacting transactivator 2 (Cited2) (Mus musculus (Mouse)).